Here is a 677-residue protein sequence, read N- to C-terminus: Methionine--tRNA ligase (677 aa).

The 'HIGH' region signature appears at 15–25 (PYANGSIHLGH). Zn(2+)-binding residues include cysteine 146, cysteine 149, cysteine 159, and cysteine 162. Residues 333–337 (KMSKS) carry the 'KMSKS' region motif. An ATP-binding site is contributed by lysine 336. The 103-residue stretch at 575–677 (DFAKIDLRVA…DGAKPGQQVK (103 aa)) folds into the tRNA-binding domain.

The protein belongs to the class-I aminoacyl-tRNA synthetase family. MetG type 1 subfamily. As to quaternary structure, homodimer. Zn(2+) is required as a cofactor.

It localises to the cytoplasm. It catalyses the reaction tRNA(Met) + L-methionine + ATP = L-methionyl-tRNA(Met) + AMP + diphosphate. In terms of biological role, is required not only for elongation of protein synthesis but also for the initiation of all mRNA translation through initiator tRNA(fMet) aminoacylation. The polypeptide is Methionine--tRNA ligase (Salmonella paratyphi B (strain ATCC BAA-1250 / SPB7)).